The chain runs to 261 residues: Cytochrome c oxidase subunit 3 (261 aa).

The Mitochondrial matrix segment spans residues 1-15 (MTHQLHAYHMVKPSP). Residues 16 to 34 (WPLTGALSAFLLTSGLIMW) traverse the membrane as a helical segment. Topologically, residues 35 to 40 (FHFYST) are mitochondrial intermembrane. The helical transmembrane segment at 41–66 (ALLTLGLLTNVLTMYQWWRDIIREST) threads the bilayer. Topologically, residues 67-72 (YQGHHT) are mitochondrial matrix. Residues 73-105 (TPVQKSLRYGMTLFIISEVFFFAGFFWAFYHSS) traverse the membrane as a helical segment. The Mitochondrial intermembrane portion of the chain corresponds to 106–128 (LAPTPRLGCHWPPTGITPLNPLE). The chain crosses the membrane as a helical span at residues 129–152 (VPLLNTSVLLASGVTITWAHHSLM). Residues 153-155 (NGN) lie on the Mitochondrial matrix side of the membrane. Residues 156-183 (RKQTIQALLITILLGTYFTLVQISEYFE) form a helical membrane-spanning segment. Residues 184–190 (APFTISD) lie on the Mitochondrial intermembrane side of the membrane. Residues 191-223 (GIYGSTFFVATGFHGLHVIIGSTFLLICLIRQL) traverse the membrane as a helical segment. Residues 224 to 232 (FYHFTPSHH) lie on the Mitochondrial matrix side of the membrane. Residues 233 to 256 (FGFEAAAWYWHFVDVIWLFLYISI) form a helical membrane-spanning segment. The Mitochondrial intermembrane portion of the chain corresponds to 257–261 (YWWGS).

This sequence belongs to the cytochrome c oxidase subunit 3 family. As to quaternary structure, component of the cytochrome c oxidase (complex IV, CIV), a multisubunit enzyme composed of 14 subunits. The complex is composed of a catalytic core of 3 subunits MT-CO1, MT-CO2 and MT-CO3, encoded in the mitochondrial DNA, and 11 supernumerary subunits COX4I, COX5A, COX5B, COX6A, COX6B, COX6C, COX7A, COX7B, COX7C, COX8 and NDUFA4, which are encoded in the nuclear genome. The complex exists as a monomer or a dimer and forms supercomplexes (SCs) in the inner mitochondrial membrane with NADH-ubiquinone oxidoreductase (complex I, CI) and ubiquinol-cytochrome c oxidoreductase (cytochrome b-c1 complex, complex III, CIII), resulting in different assemblies (supercomplex SCI(1)III(2)IV(1) and megacomplex MCI(2)III(2)IV(2)).

Its subcellular location is the mitochondrion inner membrane. It catalyses the reaction 4 Fe(II)-[cytochrome c] + O2 + 8 H(+)(in) = 4 Fe(III)-[cytochrome c] + 2 H2O + 4 H(+)(out). Functionally, component of the cytochrome c oxidase, the last enzyme in the mitochondrial electron transport chain which drives oxidative phosphorylation. The respiratory chain contains 3 multisubunit complexes succinate dehydrogenase (complex II, CII), ubiquinol-cytochrome c oxidoreductase (cytochrome b-c1 complex, complex III, CIII) and cytochrome c oxidase (complex IV, CIV), that cooperate to transfer electrons derived from NADH and succinate to molecular oxygen, creating an electrochemical gradient over the inner membrane that drives transmembrane transport and the ATP synthase. Cytochrome c oxidase is the component of the respiratory chain that catalyzes the reduction of oxygen to water. Electrons originating from reduced cytochrome c in the intermembrane space (IMS) are transferred via the dinuclear copper A center (CU(A)) of subunit 2 and heme A of subunit 1 to the active site in subunit 1, a binuclear center (BNC) formed by heme A3 and copper B (CU(B)). The BNC reduces molecular oxygen to 2 water molecules using 4 electrons from cytochrome c in the IMS and 4 protons from the mitochondrial matrix. The polypeptide is Cytochrome c oxidase subunit 3 (MT-CO3) (Papio hamadryas (Hamadryas baboon)).